Consider the following 185-residue polypeptide: Large ribosomal subunit protein uL5 (185 aa).

Belongs to the universal ribosomal protein uL5 family. Part of the 50S ribosomal subunit; part of the 5S rRNA/L5/L18/L25 subcomplex. Contacts the 5S rRNA and the P site tRNA. Forms a bridge to the 30S subunit in the 70S ribosome.

Its function is as follows. This is one of the proteins that bind and probably mediate the attachment of the 5S RNA into the large ribosomal subunit, where it forms part of the central protuberance. In the 70S ribosome it contacts protein S13 of the 30S subunit (bridge B1b), connecting the 2 subunits; this bridge is implicated in subunit movement. Contacts the P site tRNA; the 5S rRNA and some of its associated proteins might help stabilize positioning of ribosome-bound tRNAs. This Xanthobacter autotrophicus (strain ATCC BAA-1158 / Py2) protein is Large ribosomal subunit protein uL5.